The sequence spans 70 residues: Eglin C (70 aa).

This sequence belongs to the protease inhibitor I13 (potato type I serine protease inhibitor) family.

Its function is as follows. Inhibits both elastase and cathepsin G. The polypeptide is Eglin C (Hirudo medicinalis (Medicinal leech)).